The chain runs to 762 residues: Alpha-xylosidase XylQ (762 aa).

Asp414 acts as the Nucleophile in catalysis. Residue Glu417 is part of the active site.

The protein belongs to the glycosyl hydrolase 31 family.

It localises to the cell membrane. It carries out the reaction Hydrolysis of terminal, non-reducing alpha-D-xylose residues with release of alpha-D-xylose.. In terms of biological role, involved in the metabolism of isoprimeverose. Hydrolyzes isoprimeverose into equimolar amounts of glucose and xylose. In vitro, can also use p-nitrophenyl-alpha-D-xylopyranoside (alpha-p-NPX). The polypeptide is Alpha-xylosidase XylQ (Lactiplantibacillus pentosus (Lactobacillus pentosus)).